The sequence spans 143 residues: Transcriptional regulator MraZ (143 aa).

2 SpoVT-AbrB domains span residues 5–47 and 76–119; these read EYQH…PQDE and ATEC…SKER.

This sequence belongs to the MraZ family. As to quaternary structure, forms oligomers.

Its subcellular location is the cytoplasm. It localises to the nucleoid. The protein is Transcriptional regulator MraZ of Brevibacillus brevis (strain 47 / JCM 6285 / NBRC 100599).